Here is a 475-residue protein sequence, read N- to C-terminus: Trifunctional enzyme subunit beta, mitochondrial (475 aa).

Residues 1 to 34 constitute a mitochondrion transit peptide; the sequence is MISLLTYTLKNLPNTSKWALRFCMRPLSSSSQLQ. Lysine 73 bears the N6-acetyllysine; alternate mark. At lysine 73 the chain carries N6-succinyllysine; alternate. The Acyl-thioester intermediate role is filled by cysteine 139. Residues 174 to 221 lie within the membrane without spanning it; the sequence is IRHSRKMRKMMLDLNKAKTLAQRLSIISKFRLNFLSPELPAVSEFSTS. Residue lysine 189 is modified to N6-acetyllysine; alternate. Position 189 is an N6-succinyllysine; alternate (lysine 189). N6-succinyllysine occurs at positions 191 and 292. Position 294 is an N6-acetyllysine; alternate (lysine 294). Lysine 294 is modified (N6-succinyllysine; alternate). N6-acetyllysine is present on lysine 299. Residue lysine 333 is modified to N6-acetyllysine; alternate. Lysine 333 is subject to N6-succinyllysine; alternate. N6-acetyllysine occurs at positions 349 and 362. Residue cysteine 459 is the Proton donor/acceptor of the active site.

The protein belongs to the thiolase-like superfamily. Thiolase family. As to quaternary structure, heterotetramer of 2 alpha/HADHA and 2 beta/HADHB subunits; forms the mitochondrial trifunctional enzyme. Also purified as higher order heterooligomers including a 4 alpha/HADHA and 4 beta/HADHB heterooligomer which physiological significance remains unclear. The mitochondrial trifunctional enzyme interacts with MTLN. Interacts with RSAD2/viperin.

The protein localises to the mitochondrion. It localises to the mitochondrion inner membrane. Its subcellular location is the mitochondrion outer membrane. The protein resides in the endoplasmic reticulum. It carries out the reaction an acyl-CoA + acetyl-CoA = a 3-oxoacyl-CoA + CoA. The catalysed reaction is butanoyl-CoA + acetyl-CoA = 3-oxohexanoyl-CoA + CoA. The enzyme catalyses hexanoyl-CoA + acetyl-CoA = 3-oxooctanoyl-CoA + CoA. It catalyses the reaction octanoyl-CoA + acetyl-CoA = 3-oxodecanoyl-CoA + CoA. It carries out the reaction decanoyl-CoA + acetyl-CoA = 3-oxododecanoyl-CoA + CoA. The catalysed reaction is dodecanoyl-CoA + acetyl-CoA = 3-oxotetradecanoyl-CoA + CoA. The enzyme catalyses tetradecanoyl-CoA + acetyl-CoA = 3-oxohexadecanoyl-CoA + CoA. It functions in the pathway lipid metabolism; fatty acid beta-oxidation. Functionally, mitochondrial trifunctional enzyme catalyzes the last three of the four reactions of the mitochondrial beta-oxidation pathway. The mitochondrial beta-oxidation pathway is the major energy-producing process in tissues and is performed through four consecutive reactions breaking down fatty acids into acetyl-CoA. Among the enzymes involved in this pathway, the trifunctional enzyme exhibits specificity for long-chain fatty acids. Mitochondrial trifunctional enzyme is a heterotetrameric complex composed of two proteins, the trifunctional enzyme subunit alpha/HADHA carries the 2,3-enoyl-CoA hydratase and the 3-hydroxyacyl-CoA dehydrogenase activities, while the trifunctional enzyme subunit beta/HADHB described here bears the 3-ketoacyl-CoA thiolase activity. The chain is Trifunctional enzyme subunit beta, mitochondrial (HADHB) from Bos taurus (Bovine).